A 163-amino-acid chain; its full sequence is Cyanate hydratase (163 aa).

Residues arginine 103, glutamate 106, and serine 129 contribute to the active site.

It belongs to the cyanase family.

The enzyme catalyses cyanate + hydrogencarbonate + 3 H(+) = NH4(+) + 2 CO2. Catalyzes the reaction of cyanate with bicarbonate to produce ammonia and carbon dioxide. This Ajellomyces dermatitidis (strain ER-3 / ATCC MYA-2586) (Blastomyces dermatitidis) protein is Cyanate hydratase.